We begin with the raw amino-acid sequence, 459 residues long: Ribulose bisphosphate carboxylase large chain (459 aa).

Residue K4 is modified to N6,N6,N6-trimethyllysine. Residues N113 and T163 each coordinate substrate. K165 serves as the catalytic Proton acceptor. Position 167 (K167) interacts with substrate. The Mg(2+) site is built by K191, D193, and E194. K191 carries the N6-carboxylysine modification. Catalysis depends on H284, which acts as the Proton acceptor. Substrate-binding residues include R285, H317, and S369.

The protein belongs to the RuBisCO large chain family. Type I subfamily. As to quaternary structure, heterohexadecamer of 8 large chains and 8 small chains; disulfide-linked. The disulfide link is formed within the large subunit homodimers. Mg(2+) is required as a cofactor. The disulfide bond which can form in the large chain dimeric partners within the hexadecamer appears to be associated with oxidative stress and protein turnover.

The protein resides in the plastid. It is found in the chloroplast. It catalyses the reaction 2 (2R)-3-phosphoglycerate + 2 H(+) = D-ribulose 1,5-bisphosphate + CO2 + H2O. The enzyme catalyses D-ribulose 1,5-bisphosphate + O2 = 2-phosphoglycolate + (2R)-3-phosphoglycerate + 2 H(+). RuBisCO catalyzes two reactions: the carboxylation of D-ribulose 1,5-bisphosphate, the primary event in carbon dioxide fixation, as well as the oxidative fragmentation of the pentose substrate in the photorespiration process. Both reactions occur simultaneously and in competition at the same active site. This Nypa fruticans (Nypa palm) protein is Ribulose bisphosphate carboxylase large chain.